Here is a 173-residue protein sequence, read N- to C-terminus: Ribosome maturation factor RimM (173 aa).

The 74-residue stretch at 93 to 166 (EDEYLVSDMI…KMLVDTIEGM (74 aa)) folds into the PRC barrel domain.

Belongs to the RimM family. As to quaternary structure, binds ribosomal protein uS19.

The protein resides in the cytoplasm. Functionally, an accessory protein needed during the final step in the assembly of 30S ribosomal subunit, possibly for assembly of the head region. Essential for efficient processing of 16S rRNA. May be needed both before and after RbfA during the maturation of 16S rRNA. It has affinity for free ribosomal 30S subunits but not for 70S ribosomes. The protein is Ribosome maturation factor RimM of Fusobacterium nucleatum subsp. nucleatum (strain ATCC 25586 / DSM 15643 / BCRC 10681 / CIP 101130 / JCM 8532 / KCTC 2640 / LMG 13131 / VPI 4355).